Reading from the N-terminus, the 130-residue chain is Small ribosomal subunit protein uS11c (130 aa).

This sequence belongs to the universal ribosomal protein uS11 family. As to quaternary structure, part of the 30S ribosomal subunit.

It is found in the plastid. It localises to the cyanelle. The chain is Small ribosomal subunit protein uS11c from Cyanophora paradoxa.